The chain runs to 180 residues: Glycoprotein Xg (180 aa).

Residues 1-21 (MESWWGLPCLAFLCFLMHARG) form the signal peptide. Residues 22–142 (QRDFDLADAL…GNPEGNMVAK (121 aa)) are Extracellular-facing. The tract at residues 28-133 (ADALDDPEPT…HGGDHHSTYG (106 aa)) is disordered. The segment covering 47 to 57 (KPKPPYYPQPE) has biased composition (pro residues). Residues 143–163 (IVSPIVSVVVVTLLGAAASYF) traverse the membrane as a helical segment. Residues 164–180 (KLNNRRNCFRTHEPENV) are Cytoplasmic-facing.

It belongs to the CD99 family. Post-translationally, O-glycosylated. In terms of tissue distribution, expressed in erythroid tissues, including thymus, bone marrow and fetal liver, and in several nonerythroid tissues, such as heart, placenta, skeletal muscle, thyroid and trachea, as well as in skin fibroblasts. Expression is low or undetectable in other tissues.

It is found in the cell membrane. This chain is Glycoprotein Xg (XG), found in Homo sapiens (Human).